The chain runs to 412 residues: L-threonine:uridine-5'-aldehyde transaldolase (412 aa).

Lysine 229 carries the post-translational modification N6-(pyridoxal phosphate)lysine.

It belongs to the SHMT family. Pyridoxal 5'-phosphate is required as a cofactor.

It carries out the reaction uridine-5'-aldehyde + L-threonine = (5'S,6'S)-C-glycyluridine + acetaldehyde. Its pathway is antibiotic biosynthesis. Its function is as follows. Transaldolase involved in the biosynthesis of the capuramycin-type nucleoside antibiotic A-102395. Catalyzes the condensation of L-threonine and uridine-5'-aldehyde to form 5'-C-glycyluridine (GlyU). This is L-threonine:uridine-5'-aldehyde transaldolase from Amycolatopsis sp.